A 270-amino-acid polypeptide reads, in one-letter code: Probable feruloyl esterase C (270 aa).

Residues 1–21 form the signal peptide; that stretch reads MIKSIILQAIMVLSTLTSVHG. N-linked (GlcNAc...) asparagine glycosylation is present at asparagine 23.

The protein belongs to the faeC family.

It is found in the secreted. The catalysed reaction is feruloyl-polysaccharide + H2O = ferulate + polysaccharide.. Involved in degradation of plant cell walls. Hydrolyzes the feruloyl-arabinose ester bond in arabinoxylans, and the feruloyl-galactose ester bond in pectin. Active against paranitrophenyl-acetate, methyl ferulate and wheat arabinoxylan. The polypeptide is Probable feruloyl esterase C (faeC) (Aspergillus oryzae (strain ATCC 42149 / RIB 40) (Yellow koji mold)).